A 250-amino-acid polypeptide reads, in one-letter code: Accessory gland-specific peptide 26Aa (250 aa).

A signal peptide spans 1–18 (MNQILLCSQILLLFFTVA). The segment at 79–100 (DYPINNSKSRKNSSTLPSPILT) is disordered. Residues 82–95 (INNSKSRKNSSTLP) show a composition bias toward polar residues. 3 N-linked (GlcNAc...) asparagine glycosylation sites follow: Asn83, Asn90, and Asn131. Disordered regions lie at residues 172–191 (NVQN…SKDI) and 230–250 (NNPA…PSTT). The span at 178-187 (KSTKSCKKRP) shows a compositional bias: basic residues. Residues 240–250 (KSPSEGNPSTT) are compositionally biased toward polar residues.

Proteolytically cleaved as it is secreted and in the recipient female. Main cells of the accessory glands of males.

The protein localises to the secreted. The protein resides in the extracellular space. In terms of biological role, this protein is transferred from male to female's hemolymph during mating, affecting egglaying and behavior after mating. The polypeptide is Accessory gland-specific peptide 26Aa (Acp26Aa) (Drosophila mauritiana (Fruit fly)).